A 361-amino-acid polypeptide reads, in one-letter code: Microtubule-associated protein Jupiter (361 aa).

The span at 1-15 shows a compositional bias: polar residues; it reads MISNYDITDSKSSSK. 2 disordered regions span residues 1-38 and 70-99; these read MISN…TPRN and IGDN…TPGK. Ser-24 bears the Phosphoserine mark. Phosphothreonine is present on Thr-35. Basic and acidic residues predominate over residues 73–87; it reads NPRRGQKPVDSHSRL. Thr-96 carries the post-translational modification Phosphothreonine. Ser-105 carries the phosphoserine modification. Composition is skewed to low complexity over residues 125–134 and 141–154; these read GSSTANTTNG and SGSV…VSSS. 2 disordered regions span residues 125-165 and 328-361; these read GSST…SGSR and GSTN…SGLW. A phosphoserine mark is found at Ser-143 and Ser-154. The segment covering 155–165 has biased composition (polar residues); that stretch reads TENLKMNSGSR.

The protein belongs to the MAP Jupiter family.

The protein resides in the nucleus. Its subcellular location is the cytoplasm. It is found in the cytoskeleton. It localises to the spindle. In terms of biological role, binds to all microtubule populations. This Drosophila persimilis (Fruit fly) protein is Microtubule-associated protein Jupiter.